We begin with the raw amino-acid sequence, 137 residues long: MAPSKSIKSVVICVLILGLVLEQVQVEGKSCCKDTLARNCYNTCHFAGGSRPVCAGACRCKIISGPKCPSDYPKLNLLPESGEPDVTQYCTIGCRNSVCDNMDNVFRGQEMKFDMGLCSNACARFCNDGAVIQSVEA.

The N-terminal stretch at 1–28 is a signal peptide; that stretch reads MAPSKSIKSVVICVLILGLVLEQVQVEG. Intrachain disulfides connect Cys31–Cys68, Cys32–Cys60, Cys40–Cys58, and Cys44–Cys54. Positions 75-137 are cleaved as a propeptide — acidic domain; it reads LNLLPESGEP…DGAVIQSVEA (63 aa).

The protein belongs to the plant thionin (TC 1.C.44) family. 4 C-C subfamily.

Its subcellular location is the secreted. In terms of biological role, thionins are small plant proteins which are toxic to animal cells. They seem to exert their toxic effect at the level of the cell membrane. Their precise function is not known. The sequence is that of Leaf-specific thionin DB4 (THI1.3) from Hordeum vulgare (Barley).